The chain runs to 90 residues: Elongation factor 1-beta (90 aa).

It belongs to the EF-1-beta/EF-1-delta family.

In terms of biological role, promotes the exchange of GDP for GTP in EF-1-alpha/GDP, thus allowing the regeneration of EF-1-alpha/GTP that could then be used to form the ternary complex EF-1-alpha/GTP/AAtRNA. This is Elongation factor 1-beta from Desulfurococcus amylolyticus (strain DSM 18924 / JCM 16383 / VKM B-2413 / 1221n) (Desulfurococcus kamchatkensis).